The primary structure comprises 255 residues: 1-(5-phosphoribosyl)-5-[(5-phosphoribosylamino)methylideneamino] imidazole-4-carboxamide isomerase (255 aa).

Catalysis depends on Asp-8, which acts as the Proton acceptor. The active-site Proton donor is the Asp-129.

Belongs to the HisA/HisF family.

It is found in the cytoplasm. It catalyses the reaction 1-(5-phospho-beta-D-ribosyl)-5-[(5-phospho-beta-D-ribosylamino)methylideneamino]imidazole-4-carboxamide = 5-[(5-phospho-1-deoxy-D-ribulos-1-ylimino)methylamino]-1-(5-phospho-beta-D-ribosyl)imidazole-4-carboxamide. The protein operates within amino-acid biosynthesis; L-histidine biosynthesis; L-histidine from 5-phospho-alpha-D-ribose 1-diphosphate: step 4/9. The sequence is that of 1-(5-phosphoribosyl)-5-[(5-phosphoribosylamino)methylideneamino] imidazole-4-carboxamide isomerase from Gloeobacter violaceus (strain ATCC 29082 / PCC 7421).